A 643-amino-acid chain; its full sequence is Threonine--tRNA ligase (643 aa).

Positions 1 to 61 constitute a TGS domain; that stretch reads MIKVSLKDGS…NEDVSLSICT (61 aa). The catalytic stretch occupies residues 240-540; the sequence is DHNKLGRELK…LIEKYAGAFP (301 aa). Cysteine 335, histidine 386, and histidine 517 together coordinate Zn(2+).

This sequence belongs to the class-II aminoacyl-tRNA synthetase family. As to quaternary structure, homodimer. Requires Zn(2+) as cofactor.

The protein localises to the cytoplasm. It carries out the reaction tRNA(Thr) + L-threonine + ATP = L-threonyl-tRNA(Thr) + AMP + diphosphate + H(+). In terms of biological role, catalyzes the attachment of threonine to tRNA(Thr) in a two-step reaction: L-threonine is first activated by ATP to form Thr-AMP and then transferred to the acceptor end of tRNA(Thr). Also edits incorrectly charged L-seryl-tRNA(Thr). The protein is Threonine--tRNA ligase of Clostridium botulinum (strain Alaska E43 / Type E3).